Consider the following 310-residue polypeptide: Olfactory receptor 2A7 (310 aa).

Over 1–24 (MGDNITSITEFLLLGFPVGPRIQM) the chain is Extracellular. An N-linked (GlcNAc...) asparagine glycan is attached at N4. The helical transmembrane segment at 25-48 (LLFGLFSLFYVFTLLGNGTILGLI) threads the bilayer. Over 49–56 (SLDSRLHA) the chain is Cytoplasmic. Residues 57-78 (PMYFFLSHLAVVDIAYACNTVP) traverse the membrane as a helical segment. Residues 79-99 (RMLVNLLHPAKPISFAGRMMQ) are Extracellular-facing. The chain crosses the membrane as a helical span at residues 100-119 (TFLFSTFAVTECLLLVVMSY). Residues 120 to 138 (DLYVAICHPLRYLAIMTWR) lie on the Cytoplasmic side of the membrane. A helical transmembrane segment spans residues 139–157 (VCITLAVTSWTTGVLLSLI). The Extracellular portion of the chain corresponds to 158 to 194 (HLVLLLPLPFCRPQKIYHFFCEILAVLKLACADTHIN). A helical transmembrane segment spans residues 195 to 218 (ENMVLAGAISGLVGPLSTIVVSYM). Over 219-235 (CILCAILQIQSREVQRK) the chain is Cytoplasmic. A helical membrane pass occupies residues 236–258 (AFCTCFSHLCVIGLFYGTAIIMY). Residues 259-271 (VGPRYGNPKEQKK) lie on the Extracellular side of the membrane. Residues 272 to 291 (YLLLFHSLFNPMLNPLICSL) form a helical membrane-spanning segment. Topologically, residues 292-310 (RNSEVKNTLKRVLGVERAL) are cytoplasmic.

Belongs to the G-protein coupled receptor 1 family.

It is found in the cell membrane. In terms of biological role, odorant receptor. This Homo sapiens (Human) protein is Olfactory receptor 2A7 (OR2A7).